The chain runs to 148 residues: Large ribosomal subunit protein bL9 (148 aa).

Belongs to the bacterial ribosomal protein bL9 family.

Functionally, binds to the 23S rRNA. In Pelotomaculum thermopropionicum (strain DSM 13744 / JCM 10971 / SI), this protein is Large ribosomal subunit protein bL9.